A 472-amino-acid chain; its full sequence is Cysteine--tRNA ligase (472 aa).

Cysteine 27 is a Zn(2+) binding site. The short motif at 29–39 (PTVYNLIHIGN) is the 'HIGH' region element. The Zn(2+) site is built by cysteine 214, histidine 239, and glutamate 243. Positions 271–275 (KMSKS) match the 'KMSKS' region motif. Residue lysine 274 participates in ATP binding.

Belongs to the class-I aminoacyl-tRNA synthetase family. In terms of assembly, monomer. Zn(2+) is required as a cofactor.

It localises to the cytoplasm. The enzyme catalyses tRNA(Cys) + L-cysteine + ATP = L-cysteinyl-tRNA(Cys) + AMP + diphosphate. The sequence is that of Cysteine--tRNA ligase from Lachnospira eligens (strain ATCC 27750 / DSM 3376 / VPI C15-48 / C15-B4) (Eubacterium eligens).